A 1362-amino-acid chain; its full sequence is DNA-directed RNA polymerase subunit beta (1362 aa).

This sequence belongs to the RNA polymerase beta chain family. The RNAP catalytic core consists of 2 alpha, 1 beta, 1 beta' and 1 omega subunit. When a sigma factor is associated with the core the holoenzyme is formed, which can initiate transcription.

The catalysed reaction is RNA(n) + a ribonucleoside 5'-triphosphate = RNA(n+1) + diphosphate. In terms of biological role, DNA-dependent RNA polymerase catalyzes the transcription of DNA into RNA using the four ribonucleoside triphosphates as substrates. The chain is DNA-directed RNA polymerase subunit beta from Acinetobacter baylyi (strain ATCC 33305 / BD413 / ADP1).